The following is a 386-amino-acid chain: Phosphoglycerate kinase (386 aa).

Substrate is bound by residues 21 to 23, arginine 36, 59 to 62, arginine 112, and arginine 145; these read DLN and HLGR. Residues lysine 196, glutamate 313, and 339-342 contribute to the ATP site; that span reads GGDT.

It belongs to the phosphoglycerate kinase family. Monomer.

It localises to the cytoplasm. It carries out the reaction (2R)-3-phosphoglycerate + ATP = (2R)-3-phospho-glyceroyl phosphate + ADP. It participates in carbohydrate degradation; glycolysis; pyruvate from D-glyceraldehyde 3-phosphate: step 2/5. This Haemophilus influenzae (strain ATCC 51907 / DSM 11121 / KW20 / Rd) protein is Phosphoglycerate kinase (pgk).